Consider the following 456-residue polypeptide: MKLNRRHFLKTAGLSAAGILTSQLPLSSAEAVPKKPAAGPSVMGLVVPKMDTVRVGFIGVGQRGSGHVKHFCHLDGVEIKAICDTDPQVLDESIQFVTTQGLPKPAQYTGSEQAYKDLLNRDDIDIVIISTPWEWHAPMAINTMESGKHAFVEVPLALTVDECWQIVDTAERTQKNCMMMENVNYGRDELMVLNMVRQGLFGELLHGEAAYIHELRWQMKEIDSKTGSWRTYWHTKRNGNLYPTHGLGPVSQYMNINRGDRFDYLTSMSSPALGRGLYAKREFPADHERNQLDYINGDINTSLIKTVKGRTIMVQHDTTTPRPYSRHNLIQGTNGVFAGFPNRIAIEQAGSDSYHKWDMDMAKWYAKYDHPLWLQMGQEAERNGGHGGMDFLMLWRMVYCLRNSEPLDQDVYDGTAWSVVNILSQESVNNRSNSVNFPDFTRGAWKTGKPLGIIGT.

The tat-type signal signal peptide spans 1–31 (MKLNRRHFLKTAGLSAAGILTSQLPLSSAEA). NAD(+)-binding positions include 62–63 (QR), Asp-84, 133–136 (WEWH), 153–154 (EV), and Asn-182. Substrate is bound by residues Tyr-211, Arg-230, 242 to 245 (YPTH), and Tyr-324. Residue Tyr-242 coordinates NAD(+).

Belongs to the Gfo/Idh/MocA family. Glycosyl hydrolase 109 subfamily. NAD(+) serves as cofactor. Predicted to be exported by the Tat system. The position of the signal peptide cleavage has not been experimentally proven.

In terms of biological role, glycosidase. The polypeptide is Glycosyl hydrolase family 109 protein (Shewanella pealeana (strain ATCC 700345 / ANG-SQ1)).